A 600-amino-acid chain; its full sequence is Kelch-like protein 24 (600 aa).

The region spanning 66–133 (TDVIICVEGK…VYTGKVKITT (68 aa)) is the BTB domain. The 103-residue stretch at 168–270 (CLGIQRFADT…HPNYFVQTVE (103 aa)) folds into the BACK domain. Kelch repeat units follow at residues 314-363 (VIVV…ALRN), 365-407 (ILVS…VLLG), 408-454 (KVYV…SCIG), 456-502 (LFVI…SLNN), 504-544 (IYVA…VCNG), and 546-592 (IYIL…TIHR).

As to quaternary structure, forms homodimers. Interacts with GRIK2. Component of the BCR(KLHL24) E3 ubiquitin ligase complex, composed of CUL3, RBX1 and KLHL24. Interacts with CUL3. Interacts with KRT14. Autoubiquitinated. Autoubiquitination leads to proteasomal degradation and is necessary to control KLHL24 levels. Expressed in the brain.

The protein resides in the perikaryon. It localises to the cell projection. Its subcellular location is the axon. It is found in the cytoplasm. The protein localises to the cell junction. The protein resides in the desmosome. It localises to the adherens junction. Controls KRT14 levels during keratinocytes differentiation. As part of the BCR(KLHL24) E3 ubiquitin ligase complex, mediates ubiquitination of KRT14. Specifically reduces kainate receptor-mediated currents in hippocampal neurons, most probably by modulating channel properties. Has a crucial role in cardiac development and function. This is Kelch-like protein 24 (Klhl24) from Mus musculus (Mouse).